A 387-amino-acid polypeptide reads, in one-letter code: Protein REVEILLE 1 (387 aa).

2 stretches are compositionally biased toward polar residues: residues 1 to 17 (MASS…NASL) and 27 to 37 (KQIQFNDQSFG). Residues 1–44 (MASSPLTANVQGTNASLRNRDEETADKQIQFNDQSFGGNDYAPK) are disordered. Positions 50–104 (TITKERERWTDEEHKKFVEALKLYGRAWRRIEEHVGSKTAVQIRSHAQKFFSKVA) constitute an HTH myb-type domain. A DNA-binding region (H-T-H motif) is located at residues 77 to 100 (WRRIEEHVGSKTAVQIRSHAQKFF). Disordered stretches follow at residues 105 to 200 (REAT…TANA), 306 to 334 (KAVQ…TTEP), and 350 to 387 (AFSE…HLHL). The span at 124 to 134 (RPKRKPAHPYP) shows a compositional bias: basic residues. Residues 141–166 (ADQTSRSVSPSERDTQSPTSVLSTVG) are compositionally biased toward polar residues. Low complexity-rich tracts occupy residues 172–200 (SLDS…TANA) and 312–323 (GSSTGSNTGSVD). Positions 324 to 333 (DTGHTEKTTE) are enriched in basic and acidic residues.

It localises to the nucleus. Morning-phased transcription factor integrating the circadian clock and auxin pathways. Binds to the evening element (EE) of promoters. Does not act within the central clock, but regulates free auxin levels in a time-of-day specific manner. Positively regulates the expression of YUC8 during the day, but has no effect during the night. Negative regulator of freezing tolerance. In Arabidopsis thaliana (Mouse-ear cress), this protein is Protein REVEILLE 1 (RVE1).